The chain runs to 441 residues: Glutamyl-tRNA reductase (441 aa).

Substrate-binding positions include Thr49–Arg52, Ser109, Glu114–Gln116, and Gln120. The Nucleophile role is filled by Cys50. NADP(+) is bound at residue Gly198 to Ser203.

Belongs to the glutamyl-tRNA reductase family. In terms of assembly, homodimer.

The catalysed reaction is (S)-4-amino-5-oxopentanoate + tRNA(Glu) + NADP(+) = L-glutamyl-tRNA(Glu) + NADPH + H(+). It functions in the pathway porphyrin-containing compound metabolism; protoporphyrin-IX biosynthesis; 5-aminolevulinate from L-glutamyl-tRNA(Glu): step 1/2. The protein operates within porphyrin-containing compound metabolism; chlorophyll biosynthesis. In terms of biological role, catalyzes the NADPH-dependent reduction of glutamyl-tRNA(Glu) to glutamate 1-semialdehyde (GSA). This Prochlorococcus marinus (strain NATL2A) protein is Glutamyl-tRNA reductase.